Reading from the N-terminus, the 290-residue chain is Lipoyl synthase (290 aa).

[4Fe-4S] cluster is bound by residues Cys-38, Cys-43, Cys-49, Cys-64, Cys-68, Cys-71, and Ser-277. The region spanning 50–266 is the Radical SAM core domain; that stretch reads WSKGTATFLL…REIALDAGFR (217 aa).

Belongs to the radical SAM superfamily. Lipoyl synthase family. Requires [4Fe-4S] cluster as cofactor.

The protein localises to the cytoplasm. The catalysed reaction is [[Fe-S] cluster scaffold protein carrying a second [4Fe-4S](2+) cluster] + N(6)-octanoyl-L-lysyl-[protein] + 2 oxidized [2Fe-2S]-[ferredoxin] + 2 S-adenosyl-L-methionine + 4 H(+) = [[Fe-S] cluster scaffold protein] + N(6)-[(R)-dihydrolipoyl]-L-lysyl-[protein] + 4 Fe(3+) + 2 hydrogen sulfide + 2 5'-deoxyadenosine + 2 L-methionine + 2 reduced [2Fe-2S]-[ferredoxin]. It functions in the pathway protein modification; protein lipoylation via endogenous pathway; protein N(6)-(lipoyl)lysine from octanoyl-[acyl-carrier-protein]: step 2/2. Catalyzes the radical-mediated insertion of two sulfur atoms into the C-6 and C-8 positions of the octanoyl moiety bound to the lipoyl domains of lipoate-dependent enzymes, thereby converting the octanoylated domains into lipoylated derivatives. In Chlorobaculum tepidum (strain ATCC 49652 / DSM 12025 / NBRC 103806 / TLS) (Chlorobium tepidum), this protein is Lipoyl synthase.